Reading from the N-terminus, the 176-residue chain is Large ribosomal subunit protein uL22z (176 aa).

Basic and acidic residues predominate over residues 154-163; that stretch reads KEEPVKKEPE. The disordered stretch occupies residues 154 to 176; that stretch reads KEEPVKKEPETQLAAKSKKGASS.

It belongs to the universal ribosomal protein uL22 family.

The chain is Large ribosomal subunit protein uL22z (RPL17A) from Arabidopsis thaliana (Mouse-ear cress).